We begin with the raw amino-acid sequence, 396 residues long: Elongation factor Tu (396 aa).

A tr-type G domain is found at 10 to 206 (KLHVNVGTIG…ALDTHIPNPE (197 aa)). Residues 19 to 26 (GHVDHGKT) are G1. 19–26 (GHVDHGKT) contributes to the GTP binding site. Position 26 (threonine 26) interacts with Mg(2+). The segment at 60-64 (GITIS) is G2. The segment at 81 to 84 (DCPG) is G3. Residues 81–85 (DCPGH) and 136–139 (NKAD) each bind GTP. Residues 136-139 (NKAD) are G4. The G5 stretch occupies residues 174-176 (SAL).

The protein belongs to the TRAFAC class translation factor GTPase superfamily. Classic translation factor GTPase family. EF-Tu/EF-1A subfamily. As to quaternary structure, monomer.

The protein localises to the cytoplasm. The enzyme catalyses GTP + H2O = GDP + phosphate + H(+). Its function is as follows. GTP hydrolase that promotes the GTP-dependent binding of aminoacyl-tRNA to the A-site of ribosomes during protein biosynthesis. In Xylella fastidiosa (strain Temecula1 / ATCC 700964), this protein is Elongation factor Tu.